The primary structure comprises 342 residues: Platelet-activating factor receptor (342 aa).

Residues 1–16 (MEPNNSFRVDSEFRYT) are Extracellular-facing. An N-linked (GlcNAc...) asparagine glycan is attached at Asn4. A helical transmembrane segment spans residues 17 to 38 (LFPIFYSIVFVLGVIANSYVLW). The Cytoplasmic portion of the chain corresponds to 39-54 (VFARLYPSKKFNEIKI). Residues 55–74 (FMVNLTMADLLFLVTLPLWI) traverse the membrane as a helical segment. Residues 75–91 (VYYYNQGDWILPKFLCN) lie on the Extracellular side of the membrane. A disulfide bridge links Cys90 with Cys173. The helical transmembrane segment at 92-113 (LAGCFFFINTYCSVAFLAVITY) threads the bilayer. At 114-133 (NRFQAVTRPIKTAQATTRKR) the chain is on the cytoplasmic side. The helical transmembrane segment at 134–155 (GILLSLIIWVSIVGAASYFFVL) threads the bilayer. Residues 156-184 (DSTNREPNKTGSANITRCFEHYEKGSIPV) are Extracellular-facing. N-linked (GlcNAc...) asparagine glycans are attached at residues Asn163 and Asn169. Residues 185–205 (LTIHIFLVFSFFLVFLIILFC) traverse the membrane as a helical segment. The Cytoplasmic portion of the chain corresponds to 206–233 (NLVIIRTLLTQQVQIQRNAEVKRRALWM). A helical transmembrane segment spans residues 234–254 (VCTVLAVFIICFVPHHLVQLP). Topologically, residues 255-276 (WTLAELGFQDTDFHQAINDAHQ) are extracellular. Residues 277 to 296 (VTLCLLSTNCVLDPIIYCFL) traverse the membrane as a helical segment. At 297-342 (TKKFRKHLTEKLYSMRESRKCSRATSETGTEVVMQLKDVPVKSLKY) the chain is on the cytoplasmic side.

This sequence belongs to the G-protein coupled receptor 1 family. As to quaternary structure, interacts with ARRB1. Found in oviductal epithelial and stroma cells. Levels in the oviduct are raised at days 2-4 of both pregnancy and of the estrus cycle. In the endometrium, localization is predominantly to the apical borders of glandular and luminal epithelial cells. Expressed at lower levels in endometrial stromal cells. Levels in the endometrium are increased at day 20 of pregnancy (at protein level).

The protein resides in the cell membrane. In terms of biological role, receptor for platelet activating factor, a chemotactic phospholipid mediator that possesses potent inflammatory, smooth-muscle contractile and hypotensive activity. Seems to mediate its action via a G protein that activates a phosphatidylinositol-calcium second messenger system. May be involved in the morphological and physical modifications of the oviduct and uterus during the estrus cycle and early pregnancy. The polypeptide is Platelet-activating factor receptor (Bos taurus (Bovine)).